We begin with the raw amino-acid sequence, 467 residues long: UDP-N-acetylmuramate--L-alanine ligase (467 aa).

ATP is bound at residue 114-120 (GTHGKTT).

Belongs to the MurCDEF family.

The protein resides in the cytoplasm. The catalysed reaction is UDP-N-acetyl-alpha-D-muramate + L-alanine + ATP = UDP-N-acetyl-alpha-D-muramoyl-L-alanine + ADP + phosphate + H(+). It participates in cell wall biogenesis; peptidoglycan biosynthesis. Functionally, cell wall formation. This chain is UDP-N-acetylmuramate--L-alanine ligase, found in Rhodopseudomonas palustris (strain BisA53).